We begin with the raw amino-acid sequence, 243 residues long: Protein GIGAS CELL1 (243 aa).

As to quaternary structure, interacts with APC/C activators such as FZR1, FZR2, FZR3, CDC20.1 and CDC20.5. In terms of processing, phosphorylated by CDKA-1 in complex with CYCA1-2. Expressed in rapidly dividing tissues such as shoot apical meristem and young leaves. Associated with cell division but also with specific cell types.

Negative regulator of the anaphase-promoting complex/cyclosome (APC/C) ubiquitin ligase required for proper mitotic and meiotic progression and cell fate determination. Involved in entry into both meiosis I and meiosis II. Prevents endomitosis by preferentially inhibiting APC/C(CDC20). Required for megagametophyte and endosperm development. Triggers mitotic cyclins (e.g. CYCB1-1 and CYCB1-2) accumulation. Confers immunity to bacterial pathogens (e.g. Pseudomonas syringae pv. tomato DC3000), which is associated with increased expression of disease resistance (R) genes. GIG1 and PANS1 are part of a network linking centromere cohesion and cell cycle progression through control of APC/C activity. This chain is Protein GIGAS CELL1 (GIG1), found in Arabidopsis thaliana (Mouse-ear cress).